Here is a 170-residue protein sequence, read N- to C-terminus: Tubulin polymerization-promoting protein family member 2 (170 aa).

Residues 105–117 (TTGVTKSTTVGGV) show a composition bias toward low complexity. A disordered region spans residues 105–170 (TTGVTKSTTV…GAGTYDKKNQ (66 aa)). The span at 129 to 149 (THKERFDESGKGKGIEGREET) shows a compositional bias: basic and acidic residues.

The protein belongs to the TPPP family. In terms of tissue distribution, only expressed in male reproductive organs, including testis. Expressed in elongating spermatids at stages IV-VIII of the seminiferous epithelial cycle in testis and in mature sperm in the epididymis.

It localises to the cytoplasm. The protein resides in the cytosol. It is found in the cell projection. The protein localises to the cilium. Its subcellular location is the flagellum. Probable regulator of microtubule dynamics required for sperm motility. In contrast to other members of the family, has no microtubule bundling activity. The protein is Tubulin polymerization-promoting protein family member 2 of Mus musculus (Mouse).